A 199-amino-acid chain; its full sequence is Large ribosomal subunit protein bL25 (199 aa).

The protein belongs to the bacterial ribosomal protein bL25 family. CTC subfamily. Part of the 50S ribosomal subunit; part of the 5S rRNA/L5/L18/L25 subcomplex. Contacts the 5S rRNA. Binds to the 5S rRNA independently of L5 and L18.

Functionally, this is one of the proteins that binds to the 5S RNA in the ribosome where it forms part of the central protuberance. The sequence is that of Large ribosomal subunit protein bL25 from Nostoc punctiforme (strain ATCC 29133 / PCC 73102).